We begin with the raw amino-acid sequence, 1078 residues long: Rho family-interacting cell polarization regulator 2 (1078 aa).

A phosphoserine mark is found at Ser-46 and Ser-62. Residues 80-138 (MHNLGHKNNNTPKEPQPKRVEEVYRALKNGLDEYLEFHQTELDKLTAQLKDMKRNSRLG) form an involved in cell filopodia formation region. A coiled-coil region spans residues 108–137 (NGLDEYLEFHQTELDKLTAQLKDMKRNSRL). Phosphoserine is present on Ser-366. Polar residues predominate over residues 488–508 (SSLSSQNEGTEDSSSASSRNS). The segment at 488–534 (SSLSSQNEGTEDSSSASSRNSLGEDHEPKSHPKSDTVEPGKPGVATR) is disordered. Residues 509-525 (LGEDHEPKSHPKSDTVE) are compositionally biased toward basic and acidic residues. Phosphoserine is present on Ser-582.

The protein belongs to the RIPOR family. Homooligomer; homooligomerization is regulated by RHOC and leads to the formation of concatemers through the association of N- and C-termini. Interacts (phosphorylated form) with 14-3-3 proteins; these interactions occur during myogenic cell differentiation and also induces T cell proliferation arrest. Interacts (phosphorylated form) with HDAC6; this interaction occurs during early myogenic differentiation, prevents HDAC6 to deacetylate tubulin and also induces T cell proliferation arrest. Interacts with DYSF; this interaction occurs during early myogenic differentiation. Interacts with MYOF. Interacts (via active GTP- or inactive GDP-bound forms) with RHOA; this interaction is direct, blocks the loading of GTP to RHOA and decreases upon chemokine CCL19 stimulation in primary T lymphocytes. Interacts with RHOC. Interacts (via phosphorylated form) with YWHAB; this interaction occurs in a chemokine-dependent manner and does not compete for binding of RIPOR2 with RHOA nor blocks inhibition of RIPOR2-mediated RHOA activity. Interacts with YWHAE. Interacts with YWHAQ. Phosphorylated. Chemokine-induced phosphorylation in neutrophils occurs in a PKC- and AKT-dependent manner, resulting in RIPOR2 interaction with YWHAB and stabilization. Phosphorylated by PKCA, AKT1 and MAPKAPK1A; in vitro. As to expression, expressed in the cochlea. Expressed in inner hair cells and outer hair cells and Hensen's cells (at protein level). Expressed in the brain, cerebellum, spinal cord, retina, heart, spleen liver, kidney, bladder, muscle and lung. Expressed in the cochlea of the inner ear.

It is found in the cytoplasm. The protein localises to the cytoskeleton. The protein resides in the cell projection. It localises to the filopodium. Its subcellular location is the stereocilium. It is found in the stereocilium membrane. The protein localises to the apical cell membrane. Functionally, acts as an inhibitor of the small GTPase RHOA and plays several roles in the regulation of myoblast and hair cell differentiation, lymphocyte T proliferation and neutrophil polarization. Plays a role in fetal mononuclear myoblast differentiation by promoting filopodia and myotube formation. Maintains naive T lymphocytes in a quiescent state and prevents chemokine-induced T lymphocyte responses, such as cell adhesion, polarization and migration. Involved also in the regulation of neutrophil polarization, chemotaxis and adhesion. Required for normal development of inner and outer hair cell stereocilia within the cochlea of the inner ear. Plays a role for maintaining the structural organization of the basal domain of stereocilia. Involved in mechanosensory hair cell function. Required for normal hearing. The sequence is that of Rho family-interacting cell polarization regulator 2 from Mus musculus (Mouse).